Here is a 137-residue protein sequence, read N- to C-terminus: UBAP1-MVB12-associated (UMA)-domain containing protein 1 (137 aa).

Residues 1–72 form a disordered region; the sequence is MFHFFRKPPE…VSDPEMENKA (72 aa). A compositionally biased stretch (basic and acidic residues) spans 32 to 44; that stretch reads DEQRMTARGKTSD. The segment covering 50–63 has biased composition (polar residues); it reads PLETNKENSSSVTV. The UMA domain maps to 86–134; it reads LSDVPFTLAPHVLAVQGTITDLPDHLLSYDGSENLSRFWYDFTLENSVL.

In Homo sapiens (Human), this protein is UBAP1-MVB12-associated (UMA)-domain containing protein 1.